Here is a 96-residue protein sequence, read N- to C-terminus: Large ribosomal subunit protein bL21 (96 aa).

This sequence belongs to the bacterial ribosomal protein bL21 family. In terms of assembly, part of the 50S ribosomal subunit. Contacts protein L20.

This protein binds to 23S rRNA in the presence of protein L20. This Sulfurihydrogenibium sp. (strain YO3AOP1) protein is Large ribosomal subunit protein bL21.